A 255-amino-acid polypeptide reads, in one-letter code: uncharacterized protein (255 aa).

It belongs to the methyltransferase superfamily.

This is an uncharacterized protein from Mycolicibacterium vanbaalenii (strain DSM 7251 / JCM 13017 / BCRC 16820 / KCTC 9966 / NRRL B-24157 / PYR-1) (Mycobacterium vanbaalenii).